Consider the following 266-residue polypeptide: Ribosomal RNA small subunit methyltransferase A (266 aa).

Positions 16, 18, 43, 64, 89, and 110 each coordinate S-adenosyl-L-methionine.

This sequence belongs to the class I-like SAM-binding methyltransferase superfamily. rRNA adenine N(6)-methyltransferase family. RsmA subfamily.

The protein localises to the cytoplasm. The enzyme catalyses adenosine(1518)/adenosine(1519) in 16S rRNA + 4 S-adenosyl-L-methionine = N(6)-dimethyladenosine(1518)/N(6)-dimethyladenosine(1519) in 16S rRNA + 4 S-adenosyl-L-homocysteine + 4 H(+). Functionally, specifically dimethylates two adjacent adenosines (A1518 and A1519) in the loop of a conserved hairpin near the 3'-end of 16S rRNA in the 30S particle. May play a critical role in biogenesis of 30S subunits. The chain is Ribosomal RNA small subunit methyltransferase A from Marinomonas sp. (strain MWYL1).